The chain runs to 306 residues: Pantothenate kinase (306 aa).

91 to 98 is a binding site for ATP; that stretch reads GSVAVGKS.

It belongs to the prokaryotic pantothenate kinase family.

It localises to the cytoplasm. The catalysed reaction is (R)-pantothenate + ATP = (R)-4'-phosphopantothenate + ADP + H(+). The protein operates within cofactor biosynthesis; coenzyme A biosynthesis; CoA from (R)-pantothenate: step 1/5. The polypeptide is Pantothenate kinase (Streptococcus mutans serotype c (strain ATCC 700610 / UA159)).